Here is a 379-residue protein sequence, read N- to C-terminus: Neutral protease 2 homolog TRV_03208 (379 aa).

The N-terminal stretch at 1–19 (MKFFTALAAVGALLAPALA) is a signal peptide. A propeptide spanning residues 20-187 (LPTPASEEAS…DYFSKSLDKR (168 aa)) is cleaved from the precursor. 2 disulfides stabilise this stretch: Cys193/Cys263 and Cys270/Cys288. A glycan (N-linked (GlcNAc...) asparagine) is linked at Asn221. Residue His312 participates in Zn(2+) binding. Glu313 is a catalytic residue. Zn(2+)-binding residues include His316 and Asp327.

This sequence belongs to the peptidase M35 family. Zn(2+) is required as a cofactor.

It localises to the secreted. It carries out the reaction Preferential cleavage of bonds with hydrophobic residues in P1'. Also 3-Asn-|-Gln-4 and 8-Gly-|-Ser-9 bonds in insulin B chain.. Functionally, secreted metalloproteinase that allows assimilation of proteinaceous substrates. Shows high activities on basic nuclear substrates such as histone and protamine. May be involved in virulence. This is Neutral protease 2 homolog TRV_03208 from Trichophyton verrucosum (strain HKI 0517).